The chain runs to 101 residues: Large ribosomal subunit protein bL28 (101 aa).

This sequence belongs to the bacterial ribosomal protein bL28 family.

The protein is Large ribosomal subunit protein bL28 of Rhodopseudomonas palustris (strain BisB18).